Here is a 1238-residue protein sequence, read N- to C-terminus: MGDAKEAGAEGPPAGAAARGGLSLLSQGESEESSAQGSALFLGGNEVKSRAVVKYSSAPPRTAFARLEEKTDLKLPPANWLRESAKLGPAGTTILGNSKKSKPFSSFGMAYDFIDSVGNDVDVVSDSENIKKLLKIPYSKSHVSMAVHRIGRTLLLDELDIQELFMRSSQTGDWTWLKEFYQRLIDQKWQRKKKSKEHWYQKAILSKFLYYSINGDGAAQPVSSTAEQQESSSSDQTNDSEGASWPAPFEMPSSVSEDPSASSQGSEPLEPSYIVGHVASAPKEQNLITLFNDGEHSQGLKNDFVRNILWTFEDIHMLVGSNMPIFGGGRYPAVSLRLRDNNKPINVLTGIDYWLDNLICNVPELVMCFHVNGIVQKYEMIKTEEIPNLENSNFSTKVIKDIAQNILSFLKSNCTKEGHTYWLFKASGSDIVKLYDLTTLCEETEDKYQNPFTMPVAILLYKVACNMMMKKNQNKKHYGTIRTLLLNCLKLLDKSRHPQIIASANYMLSELFQLDEPKKEENSESPLNENSDESYSEEEEEMPDSDENGSYSTSSDPSDDSKAVAIIKSVGELSVPEKYKSIHQIRPSCAFPVCHDTEERCRLVLSYVLEGLKSVDSSIKKESDLPAADPSTPIPLKYEDESSRGGPEGLEKQMALFLDKMGSLQKGNYSSQSGMIPGSWQHKMKLQLILKSSKAYYVLSDAAMSLQKYGRALRYIKLALQSHDTYCCLCTNMLSEVLLFLSQYLTLCGDIQLMLAQNANNRAAHLEEFHYQTKEDQEILHSLHRESSCQGFAWATDLSTDLESQLSVSCKCYEAANEILQFSDLKSQNPEHYVQVLKRMGNIRNEIGVFYMNQAAALQSERLVSKSVSAAEQQLWKKSFSCFEKGIHNFESIEDATNAALLLCNTGRLMRICAQAHCGAGDELKREFSPEEGLYYNKAIDYYLKALRSLGTRDIHPAVWDSVNWELSTTYFTMATLQQDYAPLSRKAQEQIEKEVSEAMMKSLKYCDVDSVSARQPLCQYRAATIHHRLASMYHSCLRNQVGDEHLRKQHRVLADLHYSKAAKLFQLLKDAPCELLRVQLERVAFAEFQMTSQNSNVGKLKTLSGALDIMVRTEHAFQLIQKELIEEFGQPKSGDAAAAADASPSLNREEVMKLLSIFESRLSFLLLQSIKLLSSTKKKTSNNIEDDTILKTNKHIYSQLLRATANKTATLLERINVIVHLLGQLAAGSAASSNAVQ.

Disordered stretches follow at residues 1–38 (MGDA…AQGS), 220–268 (QPVS…GSEP), 517–561 (PKKE…SDDS), and 620–647 (KKES…RGGP). 3 stretches are compositionally biased toward low complexity: residues 9 to 38 (AEGP…AQGS), 223 to 241 (SSTA…NDSE), and 253 to 263 (SSVSEDPSASS). The span at 530–547 (NSDESYSEEEEEMPDSDE) shows a compositional bias: acidic residues. TPR repeat units lie at residues 693–726 (SKAY…HDTY) and 914–953 (AQAH…LGTR).

It localises to the nucleus. Functionally, transcription factor involved in erythroid differentiation. Involved in transcriptional activation of the globin gene. In Homo sapiens (Human), this protein is Erythroid differentiation-related factor 1 (EDRF1).